The sequence spans 83 residues: Cytochrome b559 subunit alpha (83 aa).

The helical transmembrane segment at 21 to 35 (IIHSITIPSLFIAGW) threads the bilayer. Heme is bound at residue His-23.

As to quaternary structure, heterodimer of an alpha subunit and a beta subunit. PSII is composed of 1 copy each of membrane proteins PsbA, PsbB, PsbC, PsbD, PsbE, PsbF, PsbH, PsbI, PsbJ, PsbK, PsbL, PsbM, PsbT, PsbX, PsbY, PsbZ, Psb30/Ycf12, at least 3 peripheral proteins of the oxygen-evolving complex and a large number of cofactors. It forms dimeric complexes. Requires heme b as cofactor.

Its subcellular location is the plastid. The protein resides in the chloroplast thylakoid membrane. In terms of biological role, this b-type cytochrome is tightly associated with the reaction center of photosystem II (PSII). PSII is a light-driven water:plastoquinone oxidoreductase that uses light energy to abstract electrons from H(2)O, generating O(2) and a proton gradient subsequently used for ATP formation. It consists of a core antenna complex that captures photons, and an electron transfer chain that converts photonic excitation into a charge separation. In Pisum sativum (Garden pea), this protein is Cytochrome b559 subunit alpha.